A 1363-amino-acid chain; its full sequence is Xanthine dehydrogenase (1363 aa).

A 2Fe-2S ferredoxin-type domain is found at 35 to 121 (DTIRFYLNGT…GKHVITVEGI (87 aa)). Residues Cys73, Cys78, Cys81, Cys103, Cys142, Cys145, Cys177, and Cys179 each contribute to the [2Fe-2S] cluster site. Residues 266 to 450 (FGNKRKKWYR…SSLRIPTASE (185 aa)) form the FAD-binding PCMH-type domain. FAD-binding positions include 294–301 (LIGGSTET), Phe374, 384–388 (SPAGN), Asp397, and Lys459. 2 residues coordinate Mo-molybdopterin: Gln798 and Phe829. The substrate site is built by Glu833 and Arg911. A Mo-molybdopterin-binding site is contributed by Arg943. Substrate is bound by residues Phe945 and Thr1041. Residue Ala1110 coordinates Mo-molybdopterin. Glu1295 (proton acceptor) is an active-site residue.

Belongs to the xanthine dehydrogenase family. It depends on FAD as a cofactor. The cofactor is Mo-molybdopterin. [2Fe-2S] cluster is required as a cofactor.

It is found in the peroxisome. It carries out the reaction xanthine + NAD(+) + H2O = urate + NADH + H(+). The enzyme catalyses hypoxanthine + NAD(+) + H2O = xanthine + NADH + H(+). Its function is as follows. Key enzyme in purine degradation. Catalyzes the oxidation of hypoxanthine to xanthine. Catalyzes the oxidation of xanthine to uric acid. The chain is Xanthine dehydrogenase (hxA) from Emericella nidulans (strain FGSC A4 / ATCC 38163 / CBS 112.46 / NRRL 194 / M139) (Aspergillus nidulans).